The primary structure comprises 578 residues: Probable acyl-activating enzyme 12, peroxisomal (578 aa).

The Microbody targeting signal signature appears at Ser-576–Leu-578.

Belongs to the ATP-dependent AMP-binding enzyme family. As to expression, expressed at low levels in leaves.

It localises to the peroxisome. In terms of biological role, may act as an acid--thiol ligase that activates carboxylic acids by forming acyl-CoAs. The protein is Probable acyl-activating enzyme 12, peroxisomal (AAE12) of Arabidopsis thaliana (Mouse-ear cress).